A 790-amino-acid chain; its full sequence is Eukaryotic translation initiation factor 3 subunit C (790 aa).

Residues 1–62 (MSRFFVSGYN…DGRPSGPAYF (62 aa)) are disordered. Positions 14–53 (SSEEEDLLSSEEELLTSSGEENEDSDFFNDDDESSSDEED) are enriched in acidic residues. The 173-residue stretch at 556–728 (FHQHINLELL…IVFTTDSQRS (173 aa)) folds into the PCI domain. Residues 748–790 (NEKTSSNGYAKKNQSQTQPQAQSKEVEENKFRYANVNTNTDEF) form a disordered region. Over residues 751 to 770 (TSSNGYAKKNQSQTQPQAQS) the composition is skewed to polar residues.

It belongs to the eIF-3 subunit C family. Component of the eukaryotic translation initiation factor 3 (eIF-3) complex.

Its subcellular location is the cytoplasm. In terms of biological role, component of the eukaryotic translation initiation factor 3 (eIF-3) complex, which is involved in protein synthesis of a specialized repertoire of mRNAs and, together with other initiation factors, stimulates binding of mRNA and methionyl-tRNAi to the 40S ribosome. The eIF-3 complex specifically targets and initiates translation of a subset of mRNAs involved in cell proliferation. This is Eukaryotic translation initiation factor 3 subunit C from Lodderomyces elongisporus (strain ATCC 11503 / CBS 2605 / JCM 1781 / NBRC 1676 / NRRL YB-4239) (Yeast).